We begin with the raw amino-acid sequence, 360 residues long: Phospho-N-acetylmuramoyl-pentapeptide-transferase (360 aa).

Transmembrane regions (helical) follow at residues 26-46 (AIVS…RMIA), 72-92 (PTMG…LWAY), 94-114 (SNPY…IGFV), 132-152 (WKYF…YLAG), 168-188 (VMPQ…VGTG), 199-219 (GLAI…AWAT), 236-256 (AGEL…FLWF), 263-283 (VFMG…IAVL), 288-308 (FLLV…ILQV), and 338-358 (VIVR…ATLK).

It belongs to the glycosyltransferase 4 family. MraY subfamily. The cofactor is Mg(2+).

Its subcellular location is the cell inner membrane. The enzyme catalyses UDP-N-acetyl-alpha-D-muramoyl-L-alanyl-gamma-D-glutamyl-meso-2,6-diaminopimeloyl-D-alanyl-D-alanine + di-trans,octa-cis-undecaprenyl phosphate = di-trans,octa-cis-undecaprenyl diphospho-N-acetyl-alpha-D-muramoyl-L-alanyl-D-glutamyl-meso-2,6-diaminopimeloyl-D-alanyl-D-alanine + UMP. Its pathway is cell wall biogenesis; peptidoglycan biosynthesis. Functionally, catalyzes the initial step of the lipid cycle reactions in the biosynthesis of the cell wall peptidoglycan: transfers peptidoglycan precursor phospho-MurNAc-pentapeptide from UDP-MurNAc-pentapeptide onto the lipid carrier undecaprenyl phosphate, yielding undecaprenyl-pyrophosphoryl-MurNAc-pentapeptide, known as lipid I. This chain is Phospho-N-acetylmuramoyl-pentapeptide-transferase, found in Klebsiella pneumoniae subsp. pneumoniae (strain ATCC 700721 / MGH 78578).